Consider the following 162-residue polypeptide: Probable chemoreceptor glutamine deamidase CheD 3 (162 aa).

The protein belongs to the CheD family.

It carries out the reaction L-glutaminyl-[protein] + H2O = L-glutamyl-[protein] + NH4(+). Probably deamidates glutamine residues to glutamate on methyl-accepting chemotaxis receptors (MCPs), playing an important role in chemotaxis. This chain is Probable chemoreceptor glutamine deamidase CheD 3, found in Geobacter sulfurreducens (strain ATCC 51573 / DSM 12127 / PCA).